A 36-amino-acid chain; its full sequence is Pancreatic polypeptide (36 aa).

Tyr36 carries the post-translational modification Tyrosine amide.

Belongs to the NPY family.

It is found in the secreted. Functionally, hormone secreted by pancreatic cells that acts as a regulator of pancreatic and gastrointestinal functions probably by signaling through the G protein-coupled receptor NPY4R2. This Equus przewalskii (Przewalski's horse) protein is Pancreatic polypeptide (PPY).